The primary structure comprises 349 residues: Ferredoxin--NADP reductase 1 (349 aa).

Residues Glu36, Lys44, Tyr48, Val88, Leu123, Asp290, and Ser331 each contribute to the FAD site.

It belongs to the ferredoxin--NADP reductase type 2 family. In terms of assembly, homodimer. FAD serves as cofactor.

It carries out the reaction 2 reduced [2Fe-2S]-[ferredoxin] + NADP(+) + H(+) = 2 oxidized [2Fe-2S]-[ferredoxin] + NADPH. The polypeptide is Ferredoxin--NADP reductase 1 (Bacillus cereus (strain ATCC 10987 / NRS 248)).